The primary structure comprises 864 residues: Alanine--tRNA ligase (864 aa).

The Zn(2+) site is built by histidine 534, histidine 538, cysteine 639, and histidine 643.

The protein belongs to the class-II aminoacyl-tRNA synthetase family. The cofactor is Zn(2+).

It is found in the cytoplasm. The catalysed reaction is tRNA(Ala) + L-alanine + ATP = L-alanyl-tRNA(Ala) + AMP + diphosphate. Catalyzes the attachment of alanine to tRNA(Ala) in a two-step reaction: alanine is first activated by ATP to form Ala-AMP and then transferred to the acceptor end of tRNA(Ala). Also edits incorrectly charged Ser-tRNA(Ala) and Gly-tRNA(Ala) via its editing domain. This is Alanine--tRNA ligase from Aster yellows witches'-broom phytoplasma (strain AYWB).